The sequence spans 458 residues: BUD13 homolog (458 aa).

Disordered regions lie at residues 16 to 37 (SGDI…SGLR), 81 to 328 (KQTF…TEEL), and 437 to 458 (AKTE…AEYE). Positions 138–148 (NRHDSDKDNSP) are enriched in basic and acidic residues. Composition is skewed to basic residues over residues 175–185 (RNRRSPPRTRR) and 208–218 (PRRRPSSPARR). 3 stretches are compositionally biased toward basic and acidic residues: residues 219–243 (RKDD…KKEE), 266–284 (RDLK…KMFE), and 314–328 (DQAK…TEEL). A coiled-coil region spans residues 262-356 (LQSARDLKEE…AQLEEMARVA (95 aa)).

Belongs to the CWC26 family.

This chain is BUD13 homolog, found in Caenorhabditis elegans.